The following is a 369-amino-acid chain: Core histone macro-H2A.1 (369 aa).

The region spanning 2-117 (SSRGGKKKST…NIHPELLAKK (116 aa)) is the Histone H2A domain. N6-lactoyllysine; alternate is present on residues Lys7 and Lys9. The residue at position 18 (Lys18) is an N6-methyllysine. The residue at position 116 (Lys116) is an N6-acetyllysine; alternate. Residue Lys116 forms a Glycyl lysine isopeptide (Lys-Gly) (interchain with G-Cter in ubiquitin); alternate linkage. Lys117 participates in a covalent cross-link: Glycyl lysine isopeptide (Lys-Gly) (interchain with G-Cter in ubiquitin). Lys123 is modified (N6-acetyllysine; alternate). Position 123 is an N6,N6-dimethyllysine; alternate (Lys123). Lys123 is covalently cross-linked (Glycyl lysine isopeptide (Lys-Gly) (interchain with G-Cter in SUMO2); alternate). The segment at 128 to 180 (ITPPPAKKAKSPSQKKPVSKKAGGKKGARKSKKKQGEVSKAASADSTTEGTPA) is disordered. The residue at position 129 (Thr129) is a Phosphothreonine. Over residues 144–160 (PVSKKAGGKKGARKSKK) the composition is skewed to basic residues. Lys167 is covalently cross-linked (Glycyl lysine isopeptide (Lys-Gly) (interchain with G-Cter in SUMO2)). A phosphoserine mark is found at Ser170 and Ser173. At Thr178 the chain carries Phosphothreonine. A Macro domain is found at 184–367 (TVLSTKSLFL…IYVQEMAKLD (184 aa)). Residue Lys189 forms a Glycyl lysine isopeptide (Lys-Gly) (interchain with G-Cter in SUMO2) linkage. A glycoprotein contacts are provided by Asp203, Ile204, Val226, Ser275, Gly312, Ser313, Gly314, and Asn316. Lys320 participates in a covalent cross-link: Glycyl lysine isopeptide (Lys-Gly) (interchain with G-Cter in SUMO2).

Belongs to the histone H2A family. As to quaternary structure, the nucleosome is a histone octamer containing two molecules each of H2A, H2B, H3 and H4 assembled in one H3-H4 heterotetramer and two H2A-H2B heterodimers. Interacts with HDAC1 and HDAC2. Interacts with SPOP. Part of a complex consisting of MACROH2A1, CUL3 and SPOP. In terms of assembly, interacts with PARP1. Monoubiquitinated at either Lys-116 or Lys-117. May also be polyubiquitinated. Ubiquitination is mediated by the CUL3/SPOP E3 complex and does not promote proteasomal degradation. Instead, it is required for enrichment in inactive X chromosome chromatin. As to expression, widely expressed.

The protein resides in the nucleus. It localises to the chromosome. Variant histone H2A which replaces conventional H2A in a subset of nucleosomes where it represses transcription. Nucleosomes wrap and compact DNA into chromatin, limiting DNA accessibility to the cellular machineries which require DNA as a template. Histones thereby play a central role in transcription regulation, DNA repair, DNA replication and chromosomal stability. DNA accessibility is regulated via a complex set of post-translational modifications of histones, also called histone code, and nucleosome remodeling. Involved in stable X chromosome inactivation. Inhibits the binding of transcription factors, including NF-kappa-B, and interferes with the activity of remodeling SWI/SNF complexes. Inhibits histone acetylation by EP300 and recruits class I HDACs, which induces a hypoacetylated state of chromatin. Its function is as follows. Isoform that specifically binds poly-ADP-ribose and O-acetyl-ADP-ribose and plays a key role in NAD(+) metabolism. Able to bind to the ends of poly-ADP-ribose chains created by PARP1 and cap them. This prevents PARP1 from further addition of ADP-ribose and thus limits the consumption of nuclear NAD(+), allowing the cell to maintain proper NAD(+) levels in both the nucleus and the mitochondria to promote proper mitochondrial respiration. Increases the expression of genes involved in redox metabolism, including SOD3. In terms of biological role, in contrast to isoform 1, does not bind poly-ADP-ribose. Represses SOD3 gene expression. The protein is Core histone macro-H2A.1 of Homo sapiens (Human).